The chain runs to 796 residues: Exocyst complex component 3 (796 aa).

A coiled-coil region spans residues 87–174 (PQLKEKLREL…GTNTEKEQML (88 aa)).

It belongs to the SEC6 family. As to quaternary structure, the exocyst complex is composed of sec-3/exoc1, sec-5/exoc2, sec-6/exoc3, sec-8/exoc4, sec-10/exoc5, sec-15/exoc6, exo-70/exoc7 and exo-84/exoc8.

Component of the exocyst complex involved in the docking of exocytic vesicles with fusion sites on the plasma membrane. The polypeptide is Exocyst complex component 3 (sec-6) (Caenorhabditis elegans).